The sequence spans 666 residues: Probable potassium transport system protein Kup (666 aa).

A run of 12 helical transmembrane segments spans residues 16-36, 58-78, 100-120, 149-169, 173-193, 221-241, 253-273, 294-314, 343-363, 373-393, 399-419, and 424-444; these read GFIIALGIVYGDIGTSPLYTM, ISLIIWTLTLITTIKYVLIAL, PWLIVPAMIGGATLLSDGALT, IITTLVILIVLFGIQRFGTGF, IFGPVMFIWFSFLGVSGFFNM, IFILGSIFLATTGAEALYSDL, WPFVKMCIVLSYCGQAAWILA, VYLVSLATLAAIIASQALISG, LYIPVINWILFAVTSCTVLAF, YGLAITITMLMTTILLKYYLI, PILAHLVMAFFALVEFIFFLA, and FMHGGYAVVILALAIVFVMFI.

Belongs to the HAK/KUP transporter (TC 2.A.72) family.

It is found in the cell membrane. It carries out the reaction K(+)(in) + H(+)(in) = K(+)(out) + H(+)(out). In terms of biological role, transport of potassium into the cell. Likely operates as a K(+):H(+) symporter. The protein is Probable potassium transport system protein Kup of Streptococcus pyogenes serotype M3 (strain ATCC BAA-595 / MGAS315).